The following is a 459-amino-acid chain: ERBB receptor feedback inhibitor 1 (459 aa).

Ser2 bears the N-acetylserine mark. Phosphothreonine occurs at positions 126 and 130. A disordered region spans residues 227–352 (QNRVVPDPNP…VMPPTQSFAP (126 aa)). Phosphoserine is present on residues Ser250 and Ser271. Residues 264–273 (SSCTHRASPS) show a composition bias toward polar residues. Positions 282–291 (PPRVPIPPRP) are enriched in pro residues. Ser300 is modified (phosphoserine). Positions 310-323 (DEDRPPKVPPREPL) are enriched in basic and acidic residues. Positions 324–335 (SRSNSRTPSPKS) are enriched in polar residues. An interaction with EGFR and ERBB2 and regulation of EGFR activation region spans residues 332-361 (SPKSLPSYLNGVMPPTQSFAPDPKYVSSKA). Ser458 carries the post-translational modification Phosphoserine.

It belongs to the MIG6 family. Interacts with EGFR and ERBB2.

The protein localises to the cytoplasm. Its subcellular location is the cell membrane. It localises to the nucleus. Negative regulator of EGFR signaling in skin morphogenesis. Acts as a negative regulator for several EGFR family members, including ERBB2, ERBB3 and ERBB4. Inhibits EGFR catalytic activity by interfering with its dimerization. Inhibits autophosphorylation of EGFR, ERBB2 and ERBB4. Important for normal keratinocyte proliferation and differentiation. Plays a role in modulating the response to steroid hormones in the uterus. Required for normal response to progesterone in the uterus and for fertility. Mediates epithelial estrogen responses in the uterus by regulating ESR1 levels and activation. Important for regulation of endometrium cell proliferation. Important for normal prenatal and perinatal lung development. The sequence is that of ERBB receptor feedback inhibitor 1 (Errfi1) from Rattus norvegicus (Rat).